The primary structure comprises 158 residues: Transcription elongation factor GreA (158 aa).

This sequence belongs to the GreA/GreB family.

Functionally, necessary for efficient RNA polymerase transcription elongation past template-encoded arresting sites. The arresting sites in DNA have the property of trapping a certain fraction of elongating RNA polymerases that pass through, resulting in locked ternary complexes. Cleavage of the nascent transcript by cleavage factors such as GreA or GreB allows the resumption of elongation from the new 3'terminus. GreA releases sequences of 2 to 3 nucleotides. This is Transcription elongation factor GreA from Yersinia pestis.